The chain runs to 211 residues: MLRRSKNSSTNTNADTKKRQSMHLGSKSSLISLTSEFGHGHSKTKQKKEEGTAPSQFLSPTNKRSTSSQSKLKRSSLLLDETLLKDYHSAMRHMQTNAAKEEKLRMAPSPTQSTRSESDASLSSTKSSISSIFSQDNDYSIHDLLYEDIEEMDKTDAFKINNTIAIDDSKALFVFCSNDSSSRTASIETLHESNLDNLDMGSSRRTSLDFF.

Disordered stretches follow at residues 1–73 (MLRR…SKLK) and 96–123 (TNAA…ASLS). 2 stretches are compositionally biased toward polar residues: residues 26-35 (SKSSLISLTS) and 53-62 (APSQFLSPTN). Low complexity predominate over residues 63-73 (KRSTSSQSKLK). Ser182 carries the phosphoserine modification. Residue Thr184 is modified to Phosphothreonine. A Phosphoserine modification is found at Ser186.

This is an uncharacterized protein from Saccharomyces cerevisiae (strain ATCC 204508 / S288c) (Baker's yeast).